A 632-amino-acid polypeptide reads, in one-letter code: Golgin subfamily A member 8H (632 aa).

The disordered stretch occupies residues 1-77 (MAEETQHNKL…SSATLKDLES (77 aa)). 2 coiled-coil regions span residues 110–201 (VEHQ…LSSR) and 240–468 (ECAE…EKAD). 2 stretches are compositionally biased toward basic and acidic residues: residues 352–362 (KQEERIQEQHK) and 427–440 (HGGE…EEAP). Disordered stretches follow at residues 352–379 (KQEE…EPNN), 423–452 (PGEG…DPES), and 496–524 (LSEP…DEGE). The span at 508–520 (LGGGHHQAGAQGG) shows a compositional bias: gly residues.

It belongs to the GOLGA8 family.

The chain is Golgin subfamily A member 8H (GOLGA8H) from Homo sapiens (Human).